The sequence spans 424 residues: Histidine--tRNA ligase (424 aa).

It belongs to the class-II aminoacyl-tRNA synthetase family. In terms of assembly, homodimer.

It localises to the cytoplasm. It carries out the reaction tRNA(His) + L-histidine + ATP = L-histidyl-tRNA(His) + AMP + diphosphate + H(+). This is Histidine--tRNA ligase from Salmonella gallinarum (strain 287/91 / NCTC 13346).